We begin with the raw amino-acid sequence, 908 residues long: Autophagy-related protein 9 (908 aa).

The Cytoplasmic segment spans residues 1–216 (MADGVIARLM…SGMWCIVVER (216 aa)). Residues 64 to 162 (SRATVDGRIP…IDQELQPPLH (99 aa)) are disordered. The helical transmembrane segment at 217–237 (VLHLIKVAFVAFLLTFLSQCV) threads the bilayer. The Lumenal portion of the chain corresponds to 238–259 (DFKKIPSNQKLSQVLVPQCTRN). N-linked (GlcNAc...) asparagine glycosylation occurs at N259. The helical transmembrane segment at 260 to 280 (MSGLWNIGLWLFAFYFMWKSI) threads the bilayer. Residues 281–433 (QYILDLRRLT…GILSAKLRSR (153 aa)) are Cytoplasmic-facing. An intramembrane segment occupies 434 to 454 (FIFAGVMILILSPFVAGYLII). Topologically, residues 455 to 525 (VYFLEYYNEI…KTSMVAKTVS (71 aa)) are cytoplasmic. Residues 526–546 (FIAGSIATVLALISVFDPEMF) traverse the membrane as a helical segment. The Lumenal portion of the chain corresponds to 547–555 (LGFEITHDR). Residues 556–576 (TVLFYTAVFGAIWSVARGSVS) traverse the membrane as a helical segment. Topologically, residues 577–622 (EDNAVFDPEYALGNVVEYTHYQPEHWKDRWHSADVKAEFEELYKLK) are cytoplasmic. An intramembrane segment occupies 623–643 (LVIFIEEILSILTTPFVLFFS). Topologically, residues 644–908 (LPKSADQIID…HLNRRLGGVR (265 aa)) are cytoplasmic. Disordered regions lie at residues 751-779 (AASRMGRSQRGRSKGPLPSRTPRPGAVMA) and 809-878 (QFRG…DSVV). Gly residues predominate over residues 813–825 (GNQGDGHMMGGGS). Positions 839-852 (QTHDDESEDSRAGL) are enriched in basic and acidic residues.

Belongs to the ATG9 family. Homotrimer; forms a homotrimer with a central pore that forms a path between the two membrane leaflets. Phosphorylated by apg-1. Apg-1 phosphorylation is required for preautophagosome elongation.

It is found in the preautophagosomal structure membrane. The protein localises to the cytoplasmic vesicle membrane. It localises to the golgi apparatus membrane. The protein resides in the endoplasmic reticulum membrane. The enzyme catalyses a 1,2-diacyl-sn-glycero-3-phosphocholine(in) = a 1,2-diacyl-sn-glycero-3-phosphocholine(out). It carries out the reaction a 1,2-diacyl-sn-glycero-3-phospho-L-serine(in) = a 1,2-diacyl-sn-glycero-3-phospho-L-serine(out). It catalyses the reaction a 1,2-diacyl-sn-glycero-3-phosphoethanolamine(in) = a 1,2-diacyl-sn-glycero-3-phosphoethanolamine(out). The catalysed reaction is a 1,2-diacyl-sn-glycero-3-phospho-(1D-myo-inositol-3-phosphate)(in) = a 1,2-diacyl-sn-glycero-3-phospho-(1D-myo-inositol-3-phosphate)(out). Phospholipid scramblase involved in autophagy and cytoplasm to vacuole transport (Cvt) vesicle formation. Cycles between the preautophagosomal structure/phagophore assembly site (PAS) and the cytoplasmic vesicle pool and supplies membrane for the growing autophagosome. Lipid scramblase activity plays a key role in preautophagosomal structure/phagophore assembly by distributing the phospholipids that arrive through atg-2 from the cytoplasmic to the luminal leaflet of the bilayer, thereby driving autophagosomal membrane expansion. Required for mitophagy. Also involved in endoplasmic reticulum-specific autophagic process and is essential for the survival of cells subjected to severe ER stress. Different machineries are required for anterograde trafficking to the PAS during either the Cvt pathway or bulk autophagy and for retrograde trafficking. The polypeptide is Autophagy-related protein 9 (apg-7) (Neurospora crassa (strain ATCC 24698 / 74-OR23-1A / CBS 708.71 / DSM 1257 / FGSC 987)).